Reading from the N-terminus, the 397-residue chain is Acetate kinase (397 aa).

Asparagine 7 lines the Mg(2+) pocket. Lysine 14 lines the ATP pocket. Arginine 90 contributes to the substrate binding site. The active-site Proton donor/acceptor is the aspartate 147. ATP is bound by residues histidine 207 to glycine 211, aspartate 282 to arginine 284, and glycine 330 to asparagine 334. Glutamate 383 is a Mg(2+) binding site.

Belongs to the acetokinase family. In terms of assembly, homodimer. The cofactor is Mg(2+). Mn(2+) serves as cofactor.

The protein localises to the cytoplasm. The enzyme catalyses acetate + ATP = acetyl phosphate + ADP. Its pathway is metabolic intermediate biosynthesis; acetyl-CoA biosynthesis; acetyl-CoA from acetate: step 1/2. In terms of biological role, catalyzes the formation of acetyl phosphate from acetate and ATP. Can also catalyze the reverse reaction. The chain is Acetate kinase from Clostridium botulinum (strain Okra / Type B1).